The chain runs to 1191 residues: Structural maintenance of chromosomes protein 3 (1191 aa).

32–39 (GRNGSGKS) provides a ligand contact to ATP. Lys105, Lys106, and Lys140 each carry N6-acetyllysine. Coiled coils occupy residues 173 to 357 (EESI…VKEK) and 389 to 504 (EERD…TGKA). The tract at residues 242-268 (LSAKRETSGEKSRQLRDAQQDARDKME) is disordered. Positions 530–642 (NGYHGIVMNN…CRSMEVSTQL (113 aa)) constitute an SMC hinge domain. A coiled-coil region spans residues 668 to 1022 (YYDTRKSRLE…SIMELMNVLE (355 aa)). Thr783 bears the Phosphothreonine mark. Residues Ser787, Ser886, Ser1013, Ser1065, Ser1067, Ser1074, and Ser1083 each carry the phosphoserine modification. The tract at residues 1059 to 1090 (KGDVEGSQSQDEGEGSGESERGSGSQSSVPSV) is disordered.

This sequence belongs to the SMC family. SMC3 subfamily. As to quaternary structure, forms a heterodimer with SMC1A or SMC1B in cohesin complexes. Cohesin complexes are composed of the SMC1 (SMC1A or meiosis-specific SMC1B) and SMC3 heterodimer attached via their SMC hinge domain, RAD21 which link them, and one STAG protein (STAG1, STAG2 or STAG3), which interacts with RAD21. Also found in meiosis-specific cohesin complexes. Found in a complex with SMC1A, CDCA5 and RAD21, PDS5A/SCC-112 and PDS5B/APRIN. Interacts with MXI1, MXD3 and MXD4. Interacts with NUMA1, and forms a ternary complex with KIF3B and KIFAP3, suggesting a function in tethering the chromosomes to the spindle pole and a function in chromosome movement. Interacts with PDS5A and WAPL; regulated by SMC3 acetylation. Interacts (via SMC hinge domain) with KIAA1328 (via N- and C-terminal domains). Interacts with DDX11, RPGR and STAG3. The cohesin complex interacts with the cohesin loading complex subunits NIPBL/Scc2 (via HEAT repeats) and MAU2/Scc4. NIPBL directly contacts all members of the complex, RAD21, SMC1A/B, SMC3 and STAG1. Interacts with SYCP2. Interacts with the NuRD complex component HDAC2; the interaction is direct. In terms of processing, phosphorylated at Ser-1083 in a SPO11-dependent manner. Post-translationally, acetylation at Lys-105 and Lys-106 by ESCO1 is important for genome stability and S phase sister chromatid cohesion. Regulated by DSCC1, it is required for processive DNA synthesis, coupling sister chromatid cohesion establishment during S phase to DNA replication. Deacetylation by HDAC8, regulates release of the cohesin complex from chromatin. Ubiquitinated by the DCX(DCAF15) complex, leading to its degradation. As to expression, ubiquitous.

It localises to the nucleus. It is found in the chromosome. The protein resides in the centromere. Central component of cohesin, a complex required for chromosome cohesion during the cell cycle. The cohesin complex may form a large proteinaceous ring within which sister chromatids can be trapped. At anaphase, the complex is cleaved and dissociates from chromatin, allowing sister chromatids to segregate. Cohesion is coupled to DNA replication and is involved in DNA repair. The cohesin complex also plays an important role in spindle pole assembly during mitosis and in chromosomes movement. This Rattus norvegicus (Rat) protein is Structural maintenance of chromosomes protein 3 (Smc3).